Reading from the N-terminus, the 147-residue chain is Lysozyme C (147 aa).

Residues 1–18 form the signal peptide; the sequence is MKVLLLLGFIFCSMAAHG. A C-type lysozyme domain is found at 19–147; the sequence is KRMERCEFAR…LSKYLEGCHL (129 aa). Disulfide bonds link cysteine 24–cysteine 145, cysteine 48–cysteine 133, cysteine 83–cysteine 99, and cysteine 95–cysteine 113. Catalysis depends on residues glutamate 53 and aspartate 71.

The protein belongs to the glycosyl hydrolase 22 family. As to quaternary structure, monomer.

The protein localises to the secreted. The catalysed reaction is Hydrolysis of (1-&gt;4)-beta-linkages between N-acetylmuramic acid and N-acetyl-D-glucosamine residues in a peptidoglycan and between N-acetyl-D-glucosamine residues in chitodextrins.. In terms of biological role, lysozymes have primarily a bacteriolytic function; those in tissues and body fluids are associated with the monocyte-macrophage system and enhance the activity of immunoagents. The sequence is that of Lysozyme C (LYZ) from Trichosurus vulpecula (Brush-tailed possum).